Here is a 105-residue protein sequence, read N- to C-terminus: Small cysteine and glycine repeat-containing protein 4 (105 aa).

The 14 X 2 AA repeats of CG stretch occupies residues Cys4 to Gly87.

The protein belongs to the KRTAP type 28 family.

In terms of biological role, in the hair cortex, hair keratin intermediate filaments are embedded in an interfilamentous matrix, consisting of hair keratin-associated proteins (KRTAP), which are essential for the formation of a rigid and resistant hair shaft through their extensive disulfide bond cross-linking with abundant cysteine residues of hair keratins. The matrix proteins include the high-sulfur and high-glycine-tyrosine keratins. This chain is Small cysteine and glycine repeat-containing protein 4, found in Homo sapiens (Human).